The primary structure comprises 802 residues: Mitogen-activated protein kinase kinase kinase 20 (802 aa).

N-acetylserine is present on S2. 3 positions are modified to phosphoserine: S2, S3, and S7. Positions 16-277 constitute a Protein kinase domain; that stretch reads LQFFENCGGG…NLPDQCNSFL (262 aa). Residues 22–30 and K45 each bind ATP; that span reads CGGGSFGSV. The active-site Proton acceptor is the D133. T161 bears the Phosphothreonine; by autocatalysis mark. Residue S165 is modified to Phosphoserine; by autocatalysis. Residues S275 and S302 each carry the phosphoserine modification. Residues 287–308 are leucine-zipper; the sequence is IEATLERLKKLERDLSFKEQEL. An SAM domain is found at 339 to 410; the sequence is WTEDDVYFWV…KSAIEKLTHD (72 aa). Phosphoserine is present on residues K434, Q453, and S567. A Phosphothreonine modification is found at T586. S587, S593, and S599 each carry phosphoserine. Polar residues predominate over residues 624-642; that stretch reads YQQITPSINPSRSSSPTQY. Residues 624 to 802 are disordered; sequence YQQITPSINP…RGNYRGRRNF (179 aa). Residue T628 is modified to Phosphothreonine. 5 positions are modified to phosphoserine: S634, S638, S649, S650, and S661. A compositionally biased stretch (low complexity) spans 643–666; that stretch reads GLSRNFSSLNLSSRDSGFSSLNDS. Over residues 667–678 the composition is skewed to basic and acidic residues; the sequence is SSERGRYSDRSR. The interval 670–713 is sensing domain (S); the sequence is RGRYSDRSRNKYYRGSVSLNSSPKGRYGGKSQHSTPSRERYSGK. S685, S720, S727, and S733 each carry phosphoserine. Residues 728–741 show a composition bias toward basic and acidic residues; the sequence is PDFKRSPNDHDRRV. T744 is subject to Phosphothreonine. The interval 776 to 802 is C-terminal domain (CTD); the sequence is RKKTHRQLSAKTSKERTRGNYRGRRNF.

The protein belongs to the protein kinase superfamily. STE Ser/Thr protein kinase family. MAP kinase kinase kinase subfamily. In terms of assembly, homodimer. Interacts with ZNF33A. Component of a signaling complex containing at least AKAP13, PKN1, MAPK14, MAP3K20 and MAP2K3. Within this complex, AKAP13 interacts directly with PKN1, which in turn recruits MAPK14, MAP2K3 and MAP3K20. Interacts with EIF2AK4/GCN2; promoting EIF2AK4/GCN2 kinase activity. Interacts with isoform ZAKbeta. As to quaternary structure, interacts with isoform ZAKalpha. Requires Mg(2+) as cofactor. In terms of processing, activated by phosphorylation by PKN1, followed by autophosphorylation on Thr-161 and Ser-165. Autophosphorylation in response to ribotoxic stress promotes dissociation from colliding ribosomes and activation.

The protein resides in the cytoplasm. It localises to the nucleus. It catalyses the reaction L-seryl-[protein] + ATP = O-phospho-L-seryl-[protein] + ADP + H(+). The catalysed reaction is L-threonyl-[protein] + ATP = O-phospho-L-threonyl-[protein] + ADP + H(+). Its activity is regulated as follows. Activated in response to stress, such as ribosomal stress, osmotic shock and ionizing radiation. Activated by phosphorylation by PKN1, followed by autophosphorylation on Thr-161 and Ser-165. Stress-activated component of a protein kinase signal transduction cascade that promotes programmed cell death in response to various stress, such as ribosomal stress, osmotic shock and ionizing radiation. Acts by catalyzing phosphorylation of MAP kinase kinases, leading to activation of the JNK (MAPK8/JNK1, MAPK9/JNK2 and/or MAPK10/JNK3) and MAP kinase p38 (MAPK11, MAPK12, MAPK13 and/or MAPK14) pathways. Activates JNK through phosphorylation of MAP2K4/MKK4 and MAP2K7/MKK7, and MAP kinase p38 gamma (MAPK12) via phosphorylation of MAP2K3/MKK3 and MAP2K6/MKK6. Involved in stress associated with adrenergic stimulation: contributes to cardiac decompensation during periods of acute cardiac stress. May be involved in regulation of S and G2 cell cycle checkpoint by mediating phosphorylation of CHEK2. In terms of biological role, key component of the stress-activated protein kinase signaling cascade in response to ribotoxic stress or UV-B irradiation. Acts as the proximal sensor of ribosome collisions during the ribotoxic stress response (RSR). Directly binds to the ribosome by inserting its flexible C-terminus into the ribosomal intersubunit space, thereby acting as a sentinel for colliding ribosomes. Upon ribosome collisions, activates either the stress-activated protein kinase signal transduction cascade or the integrated stress response (ISR), leading to programmed cell death or cell survival, respectively. Dangerous levels of ribosome collisions trigger the autophosphorylation and activation of MAP3K20, which dissociates from colliding ribosomes and phosphorylates MAP kinase kinases, leading to activation of the JNK and MAP kinase p38 pathways that promote programmed cell death. Less dangerous levels of ribosome collisions trigger the integrated stress response (ISR): MAP3K20 activates EIF2AK4/GCN2 independently of its protein-kinase activity, promoting EIF2AK4/GCN2-mediated phosphorylation of EIF2S1/eIF-2-alpha. Also acts as a histone kinase by phosphorylating histone H3 at 'Ser-28' (H3S28ph). Functionally, isoform that lacks the C-terminal region that mediates ribosome-binding: does not act as a sensor of ribosome collisions in response to ribotoxic stress. May act as an antagonist of isoform ZAKalpha: interacts with isoform ZAKalpha, leading to decrease the expression of isoform ZAKalpha. This chain is Mitogen-activated protein kinase kinase kinase 20, found in Mus musculus (Mouse).